The following is a 1338-amino-acid chain: MDRASELLFYVNGRKVIEKNVDPETMLLPYLRKKLRLTGTKYGCGGGGCGACTVMISRYNPITNRIRHHPANACLIPICSLYGTAVTTVEGIGSTHTRIHPVQERIAKCHGTQCGFCTPGMVMSIYTLLRNHPEPTLDQLTDALGGNLCRCTGYRPIIDACKTFCETSGCCQSKENGVCCLDQRINGLPEFEEGSKTSPKLFAEEEFLPLDPTQELIFPPELMIMAEKQPQRTRVFGSERMMWFSPVTLKELLEFKFKYPQAPVIMGNTSVGPQMKFKGVFHPVIISPDRIEELSVVNHTHNGLTLGAGLSLAQVKDILADVVQKLPGEKTQTYHALLKHLGTLAGSQIRNMASLGGHIISRHPDSDLNPILAVGNCTLNLLSKEGKRQIPLNEQFLSKCPNADLKPQEILVSVNIPYSRKLEFVSAFRQAQRQENALAIVNSGMRVFFGEGHGIIRELSISYGGVGPATICAKNSCQKLIGRHWNEEMLDTACRLVLEEVSLSGSAPGGRVEFKRTLIISFLFKFYLEVSQILKKMDPIRYPSLADKHESALEDLHSKHHCSTLKYQHMGPKQHPEDPIGHPIMHLSGVKHATGEAIYCDDMPLVDQELFLTFVTSSRAHAKIVSIDLSEALSMPGVVDVITAEHLSDVNSFCFFTEAEEFLATDKVFCVGQLVCAVLADSEVQAKRAAKQVKIVYQDLEPLILTIKEAIQHNSFFEPERKLEYGNVDEAFKVVDQILEGEIHMGGQEHFYMETQSMLVVPKGEDQEMDVYVSTQFPKYIQDIVASTLKLPANKVMCHVKRVGGAFGGKAFKTGVIAAVTAFAANKHGRAVRCVLERGEDMLITGGRHPYLGKYKAGFMNDGRILALDMEHYSNAGNSLDESLLVIEMGLLKMDNAYKFPNLRCRGWACRTNLPSNTAFRGFGFPQAGLITESCIMEVAAKCGLSPEKVRMINMYKEIDQTPYKQEINAKNLIQCWRECMAVSSYSLRKAAVEKFNAENYWKKKGLAMVPLKYPVGLGSRAAGQAAALVHIYLDGSVLVTHGGIEMGQGVHTKMIQVVSRELGMPISNVHLRGTSTETVPNANVSGGSVVADLNGLAVKDACQTLLKRLEPIISKNPKGTWKDWAQTAFDESISLSAVGYFRGYESDINWEKGEGHPFEYFVYGAACSEVEIDCLTGDHKNIRTDIVMDVGCSINPAIDIGQIEGAFIQGMGLYTIEELNYSPQGVLHTRGPDQYKIPAICDTPTEFHISLLPPSENSNTLYSSKGLGESGVFLGCSVFFAIHDAVSAARRERGLHGPLSLNSPLTPEKIRMACEDKFTKMIPRDEPGSCVPWNVPI.

Positions serine 5–isoleucine 92 constitute a 2Fe-2S ferredoxin-type domain. Residues glutamine 113 and cysteine 151 each contribute to the Mo-molybdopterin site. The region spanning phenylalanine 236 to lysine 421 is the FAD-binding PCMH-type domain. FAD is bound by residues valine 264–valine 271, alanine 345, serine 354, histidine 358, aspartate 367, and leucine 411. Mo-molybdopterin is bound by residues alanine 806–phenylalanine 807 and methionine 1047. Serine 1068 is modified (phosphoserine). Mo-molybdopterin-binding positions include glycine 1088 to valine 1091, glutamine 1203, and leucine 1268. Glutamate 1270 functions as the Proton acceptor; for azaheterocycle hydroxylase activity in the catalytic mechanism.

It belongs to the xanthine dehydrogenase family. Homodimer. [2Fe-2S] cluster serves as cofactor. Requires FAD as cofactor. It depends on Mo-molybdopterin as a cofactor. As to expression, detected at high levels in liver, also detected in lung, kidney, lacrimal gland and olfactory mucosa.

Its subcellular location is the cytoplasm. The catalysed reaction is an aldehyde + O2 + H2O = a carboxylate + H2O2 + H(+). It catalyses the reaction retinal + O2 + H2O = retinoate + H2O2 + H(+). Functionally, oxidase with broad substrate specificity, oxidizing aromatic azaheterocycles, such as N1-methylnicotinamide, N-methylphthalazinium and phthalazine, as well as aldehydes, such as benzaldehyde, retinal, pyridoxal, and vanillin. Plays a key role in the metabolism of xenobiotics and drugs containing aromatic azaheterocyclic substituents. Participates in the bioactivation of prodrugs such as famciclovir, catalyzing the oxidation step from 6-deoxypenciclovir to penciclovir, which is a potent antiviral agent. Is probably involved in the regulation of reactive oxygen species homeostasis. May be a prominent source of superoxide generation via the one-electron reduction of molecular oxygen. May also catalyze nitric oxide (NO) production via the reduction of nitrite to NO with NADH or aldehyde as electron donor. May play a role in adipogenesis. In Macaca fascicularis (Crab-eating macaque), this protein is Aldehyde oxidase 1 (AOX1).